A 39-amino-acid chain; its full sequence is Potassium channel toxin alpha-KTx 2.8 (39 aa).

Cystine bridges form between C7–C29, C13–C34, and C17–C36.

The protein belongs to the short scorpion toxin superfamily. Potassium channel inhibitor family. Alpha-KTx 02 subfamily. Expressed by the venom gland.

It localises to the secreted. Blocks Kv1.3/KCNA3 voltage-gated potassium channels of human T-lymphocytes (Kd=0.71 nM). The protein is Potassium channel toxin alpha-KTx 2.8 of Centruroides elegans (Bark scorpion).